A 400-amino-acid chain; its full sequence is Probable peptidoglycan glycosyltransferase FtsW (400 aa).

The Cytoplasmic portion of the chain corresponds to 1-24 (MSTGSLPLGLPSRDSLDGLRNSVD). Residues 25-45 (LPLLAAAALLLGLGLIMVASA) form a helical membrane-spanning segment. Topologically, residues 46–63 (SMDLGERYYGNTWHFFQR) are periplasmic. A helical membrane pass occupies residues 64-84 (QVLFAAIGLALATVMWAIPLE). Residues 85 to 88 (RWER) lie on the Cytoplasmic side of the membrane. A helical transmembrane segment spans residues 89-109 (AGPWLLILVMVLLIAVLLPGV). Residues 110 to 118 (GRTVNGATR) are Periplasmic-facing. A helical membrane pass occupies residues 119–139 (WIPIGMFNLQVAEPVKLLVVM). The Cytoplasmic portion of the chain corresponds to 140–153 (YLAGYIVRHYSALR). Residues 154–174 (LHLRGFVRPLVVLGFGTVLLL) form a helical membrane-spanning segment. The Periplasmic portion of the chain corresponds to 175–177 (LQP). A helical transmembrane segment spans residues 178 to 198 (DFGGAAIMLAIGMGMLFLAGA). Position 199 (lysine 199) is a topological domain, cytoplasmic. A helical transmembrane segment spans residues 200–220 (LWQFAALGATIAVGMAFVAVA). Residues 221–278 (APYRVARLTAFLDPWQDPFATGFQLTQSLIAIGSGGWFGTGLGNSVQKLFYLPEAHND) are Periplasmic-facing. Residues 279–299 (FLFAVFAEEFGFIGVLALIAL) traverse the membrane as a helical segment. At 300–324 (FAVVVWRCVKIGLWAERAGHAFGSH) the chain is on the cytoplasmic side. A helical transmembrane segment spans residues 325 to 345 (LAFGVAIWLALQSALNLAVNM). At 346–354 (GLLPTKGMT) the chain is on the periplasmic side. A helical membrane pass occupies residues 355–375 (LPFLSYGGSSLIVTLMAIGLV). Residues 376–400 (MRVYREAQIPAPRQSTPPRRKRGQA) are Cytoplasmic-facing.

Belongs to the SEDS family. FtsW subfamily.

Its subcellular location is the cell inner membrane. The catalysed reaction is [GlcNAc-(1-&gt;4)-Mur2Ac(oyl-L-Ala-gamma-D-Glu-L-Lys-D-Ala-D-Ala)](n)-di-trans,octa-cis-undecaprenyl diphosphate + beta-D-GlcNAc-(1-&gt;4)-Mur2Ac(oyl-L-Ala-gamma-D-Glu-L-Lys-D-Ala-D-Ala)-di-trans,octa-cis-undecaprenyl diphosphate = [GlcNAc-(1-&gt;4)-Mur2Ac(oyl-L-Ala-gamma-D-Glu-L-Lys-D-Ala-D-Ala)](n+1)-di-trans,octa-cis-undecaprenyl diphosphate + di-trans,octa-cis-undecaprenyl diphosphate + H(+). The protein operates within cell wall biogenesis; peptidoglycan biosynthesis. Peptidoglycan polymerase that is essential for cell division. The polypeptide is Probable peptidoglycan glycosyltransferase FtsW (Thioalkalivibrio sp. (strain K90mix)).